We begin with the raw amino-acid sequence, 510 residues long: Lysine--tRNA ligase (510 aa).

Mg(2+) is bound by residues glutamate 420 and glutamate 427.

It belongs to the class-II aminoacyl-tRNA synthetase family. As to quaternary structure, homodimer. It depends on Mg(2+) as a cofactor.

It is found in the cytoplasm. It catalyses the reaction tRNA(Lys) + L-lysine + ATP = L-lysyl-tRNA(Lys) + AMP + diphosphate. This Vibrio cholerae serotype O1 (strain ATCC 39315 / El Tor Inaba N16961) protein is Lysine--tRNA ligase (lysS).